The chain runs to 190 residues: Somatotropin (190 aa).

His-19 provides a ligand contact to Zn(2+). A disulfide bond links Cys-52 and Cys-163. Ser-105 is modified (phosphoserine). Glu-172 contributes to the Zn(2+) binding site. A disulfide bond links Cys-180 and Cys-188.

Belongs to the somatotropin/prolactin family.

It is found in the secreted. Plays an important role in growth control. Its major role in stimulating body growth is to stimulate the liver and other tissues to secrete IGF1. It stimulates both the differentiation and proliferation of myoblasts. It also stimulates amino acid uptake and protein synthesis in muscle and other tissues. This chain is Somatotropin (GH1), found in Vulpes vulpes (Red fox).